An 892-amino-acid chain; its full sequence is Alanine--tRNA ligase (892 aa).

Residues His565, His569, Cys675, and His679 each contribute to the Zn(2+) site. Positions 852 to 871 are disordered; sequence MGGKGGGGRPDMAQAGGPEA.

The protein belongs to the class-II aminoacyl-tRNA synthetase family. Zn(2+) serves as cofactor.

The protein localises to the cytoplasm. It catalyses the reaction tRNA(Ala) + L-alanine + ATP = L-alanyl-tRNA(Ala) + AMP + diphosphate. In terms of biological role, catalyzes the attachment of alanine to tRNA(Ala) in a two-step reaction: alanine is first activated by ATP to form Ala-AMP and then transferred to the acceptor end of tRNA(Ala). Also edits incorrectly charged Ser-tRNA(Ala) and Gly-tRNA(Ala) via its editing domain. This chain is Alanine--tRNA ligase, found in Parvibaculum lavamentivorans (strain DS-1 / DSM 13023 / NCIMB 13966).